A 311-amino-acid polypeptide reads, in one-letter code: Putative pyruvate, phosphate dikinase regulatory protein (311 aa).

Position 180-187 (180-187 (GVSRSSKT)) interacts with ADP.

This sequence belongs to the pyruvate, phosphate/water dikinase regulatory protein family. PDRP subfamily.

The catalysed reaction is N(tele)-phospho-L-histidyl/L-threonyl-[pyruvate, phosphate dikinase] + ADP = N(tele)-phospho-L-histidyl/O-phospho-L-threonyl-[pyruvate, phosphate dikinase] + AMP + H(+). The enzyme catalyses N(tele)-phospho-L-histidyl/O-phospho-L-threonyl-[pyruvate, phosphate dikinase] + phosphate + H(+) = N(tele)-phospho-L-histidyl/L-threonyl-[pyruvate, phosphate dikinase] + diphosphate. Bifunctional serine/threonine kinase and phosphorylase involved in the regulation of the pyruvate, phosphate dikinase (PPDK) by catalyzing its phosphorylation/dephosphorylation. The polypeptide is Putative pyruvate, phosphate dikinase regulatory protein (Paramagnetospirillum magneticum (strain ATCC 700264 / AMB-1) (Magnetospirillum magneticum)).